Here is a 284-residue protein sequence, read N- to C-terminus: Bifunctional protein FolD (284 aa).

NADP(+)-binding positions include 165 to 167 (GRS), Ser190, and Val231.

It belongs to the tetrahydrofolate dehydrogenase/cyclohydrolase family. In terms of assembly, homodimer.

The catalysed reaction is (6R)-5,10-methylene-5,6,7,8-tetrahydrofolate + NADP(+) = (6R)-5,10-methenyltetrahydrofolate + NADPH. The enzyme catalyses (6R)-5,10-methenyltetrahydrofolate + H2O = (6R)-10-formyltetrahydrofolate + H(+). Its pathway is one-carbon metabolism; tetrahydrofolate interconversion. Catalyzes the oxidation of 5,10-methylenetetrahydrofolate to 5,10-methenyltetrahydrofolate and then the hydrolysis of 5,10-methenyltetrahydrofolate to 10-formyltetrahydrofolate. In Natranaerobius thermophilus (strain ATCC BAA-1301 / DSM 18059 / JW/NM-WN-LF), this protein is Bifunctional protein FolD.